Consider the following 455-residue polypeptide: Epoxide hydrolase 1 (455 aa).

A helical; Signal-anchor for type III membrane protein membrane pass occupies residues 1 to 21 (MWLELVLASLLGFVIYWFVSR). Residues 22 to 455 (DKEETLPLGD…RKFVSLAELQ (434 aa)) are Cytoplasmic-facing. The Nucleophile role is filled by Asp-226. The residue at position 295 (Arg-295) is a Dimethylated arginine. The active-site Proton donor is Tyr-374. Residue His-431 is the Proton acceptor of the active site. Lys-439 carries the N6-acetyllysine modification.

Belongs to the peptidase S33 family.

The protein localises to the microsome membrane. It is found in the endoplasmic reticulum membrane. It catalyses the reaction cis-stilbene oxide + H2O = (1R,2R)-hydrobenzoin. The enzyme catalyses 1-(4-methoxyphenyl)-N-methyl-N-[(3-methyloxetan-3-yl)methyl]methanamine + H2O = 2-{[(4-methoxybenzyl)(methyl)amino]methyl}-2-methylpropane-1,3-diol. The catalysed reaction is 8,9-epoxy-(5Z,11Z,14Z)-eicosatrienoate + H2O = 8,9-dihydroxy-(5Z,11Z,14Z)-eicosatrienoate. It carries out the reaction 11,12-epoxy-(5Z,8Z,14Z)-eicosatrienoate + H2O = 11,12-dihydroxy-(5Z,8Z,14Z)-eicosatrienoate. It catalyses the reaction 2-(5Z,8Z,11Z,14Z-eicosatetraenoyl)-glycerol + H2O = glycerol + (5Z,8Z,11Z,14Z)-eicosatetraenoate + H(+). Its activity is regulated as follows. Inhibited by 10-hydroxystearamide and methoxy-arachidonyl fluorophosphate. Its function is as follows. Biotransformation enzyme that catalyzes the hydrolysis of arene and aliphatic epoxides to less reactive and more water soluble dihydrodiols by the trans addition of water. May play a role in the metabolism of endogenous lipids such as epoxide-containing fatty acids. Metabolizes the abundant endocannabinoid 2-arachidonoylglycerol (2-AG) to free arachidonic acid (AA) and glycerol. Binds 20(S)-hydroxycholesterol (20(S)-OHC). The polypeptide is Epoxide hydrolase 1 (Rattus norvegicus (Rat)).